The primary structure comprises 49 residues: uncharacterized protein (49 aa).

A helical membrane pass occupies residues 5–27 (ILEILSAFIRILFKLLYCWALFF).

The protein resides in the membrane. This is an uncharacterized protein from Saccharomyces cerevisiae (strain ATCC 204508 / S288c) (Baker's yeast).